A 3078-amino-acid chain; its full sequence is Homeobox-like protein HDP1 (3078 aa).

10 disordered regions span residues methionine 1–asparagine 29, leucine 59–asparagine 164, serine 203–lysine 306, asparagine 949–asparagine 980, aspartate 1323–lysine 1390, serine 1415–asparagine 1445, lysine 1939–phenylalanine 2046, threonine 2115–tyrosine 2216, alanine 2599–isoleucine 2637, and glutamine 2959–proline 3019. A compositionally biased stretch (polar residues) spans cysteine 14–asparagine 29. Residues leucine 59 to isoleucine 84 show a composition bias toward basic and acidic residues. Composition is skewed to low complexity over residues asparagine 85–asparagine 94 and asparagine 114–asparagine 127. Composition is skewed to polar residues over residues isoleucine 128–threonine 137, lysine 148–histidine 157, asparagine 209–threonine 229, threonine 237–histidine 252, and asparagine 949–histidine 960. The segment covering arginine 1368–histidine 1380 has biased composition (basic residues). Positions serine 1415–serine 1433 are enriched in low complexity. Positions threonine 1434–asparagine 1445 are enriched in polar residues. The segment covering lysine 1939–asparagine 1993 has biased composition (low complexity). 2 stretches are compositionally biased toward basic and acidic residues: residues lysine 2012 to leucine 2021 and tyrosine 2029 to phenylalanine 2046. Residues threonine 2115 to asparagine 2126 show a composition bias toward polar residues. Over residues methionine 2139–valine 2160 the composition is skewed to low complexity. Residues aspartate 2163 to glutamate 2177 show a composition bias toward basic and acidic residues. Residues asparagine 2192–aspartate 2201 show a composition bias toward acidic residues. Composition is skewed to low complexity over residues asparagine 2202–tyrosine 2216, asparagine 2602–aspartate 2630, and glutamine 2959–asparagine 2989. The span at leucine 2990–isoleucine 3006 shows a compositional bias: polar residues. Positions serine 2991 to lysine 3078 are DNA-binding.

Homodimer.

It is found in the nucleus. It localises to the chromosome. Functionally, transcriptional regulator which binds to the DNA motifs 5'-GTGCACAC-3' (motif A) and 5'-[GTA]TGTA[CT][GA]TAC-3' (motif B) of genes essential for early gametocyte development, including those critical for the expansion of the inner membrane complex (IMC). This Plasmodium falciparum (isolate NF54) protein is Homeobox-like protein HDP1.